The primary structure comprises 325 residues: D-xylose 1-dehydrogenase (NADP(+)) 2 (325 aa).

The N-terminal stretch at Met1–Ala22 is a signal peptide.

This sequence belongs to the Gfo/Idh/MocA family. In terms of assembly, homotetramer.

The protein localises to the secreted. The enzyme catalyses D-xylose + NADP(+) = D-xylono-1,5-lactone + NADPH + H(+). In terms of biological role, NADP-dependent D-xylose dehydrogenase involved in the degradation of D-xylose, a major component of hemicelluloses such as xylan. Even if it shows D-xylose dehydrogenase activity, it is not essential for D-xylose degradation. This Haloferax volcanii (strain ATCC 29605 / DSM 3757 / JCM 8879 / NBRC 14742 / NCIMB 2012 / VKM B-1768 / DS2) (Halobacterium volcanii) protein is D-xylose 1-dehydrogenase (NADP(+)) 2.